A 348-amino-acid chain; its full sequence is 3-isopropylmalate dehydrogenase (348 aa).

NAD(+) is bound at residue 76 to 87 (GPKWTDPNNRPE). Residues R94, R104, R132, and D217 each coordinate substrate. 3 residues coordinate Mg(2+): D217, D241, and D245. 275–287 (GSAPDIAGKNVAN) is a binding site for NAD(+).

The protein belongs to the isocitrate and isopropylmalate dehydrogenases family. LeuB type 1 subfamily. Homodimer. The cofactor is Mg(2+). Mn(2+) is required as a cofactor.

The protein localises to the cytoplasm. The catalysed reaction is (2R,3S)-3-isopropylmalate + NAD(+) = 4-methyl-2-oxopentanoate + CO2 + NADH. It participates in amino-acid biosynthesis; L-leucine biosynthesis; L-leucine from 3-methyl-2-oxobutanoate: step 3/4. Functionally, catalyzes the oxidation of 3-carboxy-2-hydroxy-4-methylpentanoate (3-isopropylmalate) to 3-carboxy-4-methyl-2-oxopentanoate. The product decarboxylates to 4-methyl-2 oxopentanoate. The polypeptide is 3-isopropylmalate dehydrogenase (Staphylococcus aureus (strain Mu50 / ATCC 700699)).